The chain runs to 311 residues: Putative ribose-phosphate pyrophosphokinase 2 (311 aa).

ATP is bound by residues 38-40 (DGE) and 97-98 (RQ). Mg(2+)-binding residues include His131 and Asp171. Asp219 lines the D-ribose 5-phosphate pocket.

It belongs to the ribose-phosphate pyrophosphokinase family. Class I subfamily. As to quaternary structure, homohexamer. Requires Mg(2+) as cofactor.

The protein resides in the cytoplasm. It carries out the reaction D-ribose 5-phosphate + ATP = 5-phospho-alpha-D-ribose 1-diphosphate + AMP + H(+). Its pathway is metabolic intermediate biosynthesis; 5-phospho-alpha-D-ribose 1-diphosphate biosynthesis; 5-phospho-alpha-D-ribose 1-diphosphate from D-ribose 5-phosphate (route I): step 1/1. Involved in the biosynthesis of the central metabolite phospho-alpha-D-ribosyl-1-pyrophosphate (PRPP) via the transfer of pyrophosphoryl group from ATP to 1-hydroxyl of ribose-5-phosphate (Rib-5-P). The sequence is that of Putative ribose-phosphate pyrophosphokinase 2 from Listeria monocytogenes serotype 4b (strain F2365).